Here is a 357-residue protein sequence, read N- to C-terminus: Histidine biosynthesis bifunctional protein HisB (357 aa).

Residues 1-167 (MNDKILFIDR…IHKYLMQNSH (167 aa)) form a histidinol-phosphatase region. D9 (nucleophile) is an active-site residue. Residues D9 and D11 each contribute to the Mg(2+) site. D11 serves as the catalytic Proton donor. 4 residues coordinate Zn(2+): C93, H95, C101, and C103. D130 is a Mg(2+) binding site. The imidazoleglycerol-phosphate dehydratase stretch occupies residues 168–357 (RVAHIQRITN…QIPSSKGILL (190 aa)).

It in the N-terminal section; belongs to the histidinol-phosphatase family. The protein in the C-terminal section; belongs to the imidazoleglycerol-phosphate dehydratase family. Mg(2+) is required as a cofactor. It depends on Zn(2+) as a cofactor.

The protein resides in the cytoplasm. It carries out the reaction D-erythro-1-(imidazol-4-yl)glycerol 3-phosphate = 3-(imidazol-4-yl)-2-oxopropyl phosphate + H2O. It catalyses the reaction L-histidinol phosphate + H2O = L-histidinol + phosphate. It participates in amino-acid biosynthesis; L-histidine biosynthesis; L-histidine from 5-phospho-alpha-D-ribose 1-diphosphate: step 6/9. The protein operates within amino-acid biosynthesis; L-histidine biosynthesis; L-histidine from 5-phospho-alpha-D-ribose 1-diphosphate: step 8/9. In Blochmanniella floridana, this protein is Histidine biosynthesis bifunctional protein HisB.